We begin with the raw amino-acid sequence, 136 residues long: DNA-directed RNA polymerase subunit omega (136 aa).

Belongs to the RNA polymerase subunit omega family. As to quaternary structure, the RNAP catalytic core consists of 2 alpha, 1 beta, 1 beta' and 1 omega subunit. When a sigma factor is associated with the core the holoenzyme is formed, which can initiate transcription.

The enzyme catalyses RNA(n) + a ribonucleoside 5'-triphosphate = RNA(n+1) + diphosphate. In terms of biological role, promotes RNA polymerase assembly. Latches the N- and C-terminal regions of the beta' subunit thereby facilitating its interaction with the beta and alpha subunits. The sequence is that of DNA-directed RNA polymerase subunit omega from Acidiphilium cryptum (strain JF-5).